Here is a 472-residue protein sequence, read N- to C-terminus: MVIANSVKSSTTNYVVADISLSDFGRKEIKIAETEMPGLMALRDKYQSEKPLKGAKIAGSLHMTIQTAVLIETLVDLGAEVKWASCNIFSTQDHAAAAIADQGISVYAKKGETLDEYWQYTHCILDWGADSPNMILDDGGDATGLLILGSKAEKDLSVLDNPGNEEEIALFNSIKYKLETDSDFYSRIKSNIIGVTEETTTGVARLYQLQKQNALPFPAINVNDSVTKSKFDNLYGCRESLVDSIKRATDVMIAGKVALVMGFGDVGKGSAQSLRGLGAIVKVAEVDPICALQAAMEGFSVVTLDDVVEDIDIFVTATGNYQVITNKNLVKMKDEAIVCNIGHFDNEIDVASLKDYPWENIKPQVDHITLPSGNKIILLAEGRLVNLGCATGHPSFVMSNSFTNQVLAQIELFNKSEKYAKEVYVLPKHLDEMVARLHLDKIGAKLTKLTEEQADYINVSVEGPYKPELYRY.

Residues threonine 64, aspartate 138, and glutamate 198 each contribute to the substrate site. 199 to 201 serves as a coordination point for NAD(+); that stretch reads TTT. Positions 228 and 232 each coordinate substrate. Residues asparagine 233, 262-267, glutamate 285, asparagine 320, 341-343, and asparagine 386 contribute to the NAD(+) site; these read GFGDVG and IGH.

This sequence belongs to the adenosylhomocysteinase family. Requires NAD(+) as cofactor.

The protein localises to the cytoplasm. It catalyses the reaction S-adenosyl-L-homocysteine + H2O = L-homocysteine + adenosine. Its pathway is amino-acid biosynthesis; L-homocysteine biosynthesis; L-homocysteine from S-adenosyl-L-homocysteine: step 1/1. May play a key role in the regulation of the intracellular concentration of adenosylhomocysteine. This Prochlorococcus marinus (strain MIT 9312) protein is Adenosylhomocysteinase.